Reading from the N-terminus, the 73-residue chain is Putative sodium channel toxin Ts39 (73 aa).

The first 22 residues, 1–22 (MKTLNFCLFLVIISSLTVRVFC), serve as a signal peptide directing secretion. The 50-residue stretch at 24–73 (NDRFLTVNDNYVICLYINKSFVNCENLCKAYMNAKDGFCRQPHCFCTDVE) folds into the LCN-type CS-alpha/beta domain. Cystine bridges form between C37-C62, C47-C67, and C51-C69.

This sequence belongs to the long (3 C-C) scorpion toxin superfamily. Sodium channel inhibitor family. Expressed by the venom gland.

The protein resides in the secreted. Functionally, putative sodium channel toxin. This is Putative sodium channel toxin Ts39 from Tityus serrulatus (Brazilian scorpion).